The chain runs to 236 residues: Putative (5-formylfuran-3-yl)methyl phosphate synthase (236 aa).

Catalysis depends on lysine 38, which acts as the Schiff-base intermediate with substrate. The active-site Proton acceptor is the lysine 94.

Belongs to the MfnB family.

It carries out the reaction 2 D-glyceraldehyde 3-phosphate = 4-(hydroxymethyl)-2-furancarboxaldehyde phosphate + phosphate + 2 H2O. Its function is as follows. Catalyzes the formation of 4-(hydroxymethyl)-2-furancarboxaldehyde phosphate (4-HFC-P) from two molecules of glyceraldehyde-3-P (GA-3-P). The chain is Putative (5-formylfuran-3-yl)methyl phosphate synthase from Methylorubrum extorquens (Methylobacterium dichloromethanicum).